Consider the following 351-residue polypeptide: Phospho-N-acetylmuramoyl-pentapeptide-transferase (351 aa).

The next 10 membrane-spanning stretches (helical) occupy residues 17-37, 62-82, 85-105, 130-150, 163-183, 190-210, 230-250, 254-274, 281-301, and 328-348; these read MAYATIFAFLLSLIVGPHIIL, GIPTMGGILIFFCVFISLVFW, ILNVYFLIIVFVMFGFAFLGF, IIFSFISVSILYYLGGEHVSI, LGVFYIPFGMFILIAASNSFN, GLAIGLSIVITGALIIIAYIT, LVIFLGALLGGSFGFLWFNAY, IMMGDTGSLALGAILGMTALI, FSILAGVFIIETMSVIIQVIV, and QVVIRFWIIGLIFAIIALSTI.

This sequence belongs to the glycosyltransferase 4 family. MraY subfamily. It depends on Mg(2+) as a cofactor.

It localises to the cell inner membrane. It catalyses the reaction UDP-N-acetyl-alpha-D-muramoyl-L-alanyl-gamma-D-glutamyl-meso-2,6-diaminopimeloyl-D-alanyl-D-alanine + di-trans,octa-cis-undecaprenyl phosphate = di-trans,octa-cis-undecaprenyl diphospho-N-acetyl-alpha-D-muramoyl-L-alanyl-D-glutamyl-meso-2,6-diaminopimeloyl-D-alanyl-D-alanine + UMP. The protein operates within cell wall biogenesis; peptidoglycan biosynthesis. Functionally, catalyzes the initial step of the lipid cycle reactions in the biosynthesis of the cell wall peptidoglycan: transfers peptidoglycan precursor phospho-MurNAc-pentapeptide from UDP-MurNAc-pentapeptide onto the lipid carrier undecaprenyl phosphate, yielding undecaprenyl-pyrophosphoryl-MurNAc-pentapeptide, known as lipid I. This Borreliella afzelii (strain PKo) (Borrelia afzelii) protein is Phospho-N-acetylmuramoyl-pentapeptide-transferase.